The primary structure comprises 2409 residues: Reducing polyketide synthase FUB1 (2409 aa).

The span at 1 to 43 (MTLSNGSNGANGTSNGHGAHPSANGFHNAANGGANNGTPNGGA) shows a compositional bias: low complexity. Residues 1 to 49 (MTLSNGSNGANGTSNGHGAHPSANGFHNAANGGANNGTPNGGAEYNASL) form a disordered region. The Ketosynthase family 3 (KS3) domain maps to 57–479 (SSAIAVIGVS…GANAHAVLDD (423 aa)). Catalysis depends on for beta-ketoacyl synthase activity residues Cys-230, His-365, and His-403. Residues 608 to 929 (TFIFTGQGAQ…FSAIKRKQDA (322 aa)) are malonyl-CoA:ACP transacylase (MAT) domain. Ser-699 (for malonyltransferase activity) is an active-site residue. Residues 994 to 1127 (LELLGVRDPR…GLVSTSYKRE (134 aa)) are N-terminal hotdog fold. In terms of domain architecture, PKS/mFAS DH spans 994-1307 (LELLGVRDPR…TVPLRGASDP (314 aa)). A dehydratase (DH) domain region spans residues 995–1302 (ELLGVRDPRS…LEGCKTVPLR (308 aa)). Residue His-1026 is the Proton acceptor; for dehydratase activity of the active site. The interval 1155-1307 (LPSVDPTVFY…TVPLRGASDP (153 aa)) is C-terminal hotdog fold. Asp-1220 serves as the catalytic Proton donor; for dehydratase activity. The interval 1713 to 2025 (GLLDTLEYLS…SGGHVGKIVL (313 aa)) is enoyl reductase (ER) domain. The tract at residues 2049-2225 (ATYVLIGGLG…AATSINLSLV (177 aa)) is ketoreductase (KR) domain. The Carrier domain maps to 2328-2405 (EVYEIVLQQL…GFAKKVMAKS (78 aa)). Residue Ser-2365 is modified to O-(pantetheine 4'-phosphoryl)serine.

Its pathway is mycotoxin biosynthesis. Functionally, reducing polyketide synthase; part of the gene cluster that mediates the biosynthesis of fusaric acid, a mycotoxin with low to moderate toxicity to animals and humans, but with high phytotoxic properties. L-aspartate is suggested as fusaric acid amino acid precursor that is activated and further processed to O-acetyl-L-homoserine by cluster enzymes aspartate kinase FUB3 and homoserine O-acetyltransferase FUB5, as well as enzymes of the primary metabolism. The polyketide synthase (PKS) FUB1 generates the triketide trans-2-hexenal which is presumptively released by the hydrolase FUB4 and linked to the NRPS-bound amino acid precursor by NAD(P)-dependent dehydrogenase FUB6. FUB1, FUB4, and the non-canonical NRPS Fub8 may form an enzyme complex. Further processing of the NRPS-bound intermediate might be carried out by FUB6 and the sulfhydrylase FUB7, enabling a spontaneous electrocyclization to close the carbon backbone of fusaric acid. Dihydrofusaric acid is likely to be released via reduction by the thioester reductase (TR) domain of FUB8 whereupon the final oxidation to fusaric acid may (also) be performed by the FMN-dependent dehydrogenase FUB9. This is Reducing polyketide synthase FUB1 from Gibberella moniliformis (strain M3125 / FGSC 7600) (Maize ear and stalk rot fungus).